A 335-amino-acid polypeptide reads, in one-letter code: Mitochondrial uncoupling protein 4C (335 aa).

3 Solcar repeats span residues 34–125, 137–229, and 238–329; these read RNLF…FRRP, LKIY…SKRT, and EGLP…LRQW. A run of 6 helical transmembrane segments spans residues 40–57, 100–118, 138–157, 204–223, 244–264, and 304–323; these read YVNT…VFPL, GFSA…RVVL, KIYM…QALA, GVGP…VGSY, FVSS…ADVI, and GLMP…WLSV.

It belongs to the mitochondrial carrier (TC 2.A.29) family.

It localises to the mitochondrion inner membrane. Functionally, mitochondrial protein that is likely to be responsible for thermogenic respiration. Likely to function in mitochondrial uncoupling i.e. creating mitochondrial proton leaks across the inner mitochondrial membrane and can therefore dissipate the mitochondrial proton gradient and convert the energy of substrate oxidation into heat instead of ATP. Involved in cold tolerance, it is required for development to the adult stage at low temperatures. In Drosophila melanogaster (Fruit fly), this protein is Mitochondrial uncoupling protein 4C.